The primary structure comprises 161 residues: Transcription elongation factor GreA (161 aa).

A coiled-coil region spans residues 8 to 28; that stretch reads LTQEGFKQLEKELENLIQVKR.

This sequence belongs to the GreA/GreB family.

Necessary for efficient RNA polymerase transcription elongation past template-encoded arresting sites. The arresting sites in DNA have the property of trapping a certain fraction of elongating RNA polymerases that pass through, resulting in locked ternary complexes. Cleavage of the nascent transcript by cleavage factors such as GreA or GreB allows the resumption of elongation from the new 3'terminus. GreA releases sequences of 2 to 3 nucleotides. In Mycoplasma genitalium (strain ATCC 33530 / DSM 19775 / NCTC 10195 / G37) (Mycoplasmoides genitalium), this protein is Transcription elongation factor GreA.